The primary structure comprises 121 residues: Large ribosomal subunit protein bL17 (121 aa).

Belongs to the bacterial ribosomal protein bL17 family. Part of the 50S ribosomal subunit. Contacts protein L32.

This Rubrobacter xylanophilus (strain DSM 9941 / JCM 11954 / NBRC 16129 / PRD-1) protein is Large ribosomal subunit protein bL17.